A 310-amino-acid polypeptide reads, in one-letter code: N-acetyl-gamma-glutamyl-phosphate reductase (310 aa).

C117 is a catalytic residue.

This sequence belongs to the NAGSA dehydrogenase family. Type 2 subfamily.

It is found in the cytoplasm. The catalysed reaction is N-acetyl-L-glutamate 5-semialdehyde + phosphate + NADP(+) = N-acetyl-L-glutamyl 5-phosphate + NADPH + H(+). The protein operates within amino-acid biosynthesis; L-arginine biosynthesis; N(2)-acetyl-L-ornithine from L-glutamate: step 3/4. Functionally, catalyzes the NADPH-dependent reduction of N-acetyl-5-glutamyl phosphate to yield N-acetyl-L-glutamate 5-semialdehyde. The polypeptide is N-acetyl-gamma-glutamyl-phosphate reductase (Brucella suis (strain ATCC 23445 / NCTC 10510)).